We begin with the raw amino-acid sequence, 275 residues long: Phosphate import ATP-binding protein PstB 2 (275 aa).

The ABC transporter domain maps to 29–270 (LEVKNLNIYY…PSEKKTEDYI (242 aa)). 61–68 (GPSGCGKS) is an ATP binding site.

The protein belongs to the ABC transporter superfamily. Phosphate importer (TC 3.A.1.7) family. The complex is composed of two ATP-binding proteins (PstB), two transmembrane proteins (PstC and PstA) and a solute-binding protein (PstS).

The protein localises to the cell membrane. It catalyses the reaction phosphate(out) + ATP + H2O = ADP + 2 phosphate(in) + H(+). Its function is as follows. Part of the ABC transporter complex PstSACB involved in phosphate import. Responsible for energy coupling to the transport system. The polypeptide is Phosphate import ATP-binding protein PstB 2 (Bacillus licheniformis (strain ATCC 14580 / DSM 13 / JCM 2505 / CCUG 7422 / NBRC 12200 / NCIMB 9375 / NCTC 10341 / NRRL NRS-1264 / Gibson 46)).